The primary structure comprises 255 residues: MVRIFITGSSDGIGQAAAKVLSEQGHSVVLHARNADRAASAQEAVPGAEAVLVGDLSSIAETKALAEEANKLPPFDTVIHNAGIGYGATASQEITADKISAVFAVNTLAPYILTCLMHKPKARLLYMSSDSHYGGDESLRNITQSHSYGNTKLHDVMLANAFSRRWGNAIQVVSMHPGWVRTKMGGVMAPGALDRPARVLADWAIGKGDLARLKSGTFFTTSGPESAHPGADNVQKQEELLRICKEVSGVGVPGG.

Residues Ile13, Arg37, Asp55, Asn81, Tyr148, Lys152, Val180, and Thr182 each coordinate NADP(+). The active-site Proton donor is the Tyr148. Lys152 acts as the Lowers pKa of active site Tyr in catalysis.

The protein belongs to the short-chain dehydrogenases/reductases (SDR) family.

Involved in osmoadaptation. This is an uncharacterized protein from Emericella nidulans (strain FGSC A4 / ATCC 38163 / CBS 112.46 / NRRL 194 / M139) (Aspergillus nidulans).